The chain runs to 273 residues: Ribosomal RNA small subunit methyltransferase A (273 aa).

Positions 18, 20, 45, 66, 91, and 113 each coordinate S-adenosyl-L-methionine.

Belongs to the class I-like SAM-binding methyltransferase superfamily. rRNA adenine N(6)-methyltransferase family. RsmA subfamily.

The protein resides in the cytoplasm. The enzyme catalyses adenosine(1518)/adenosine(1519) in 16S rRNA + 4 S-adenosyl-L-methionine = N(6)-dimethyladenosine(1518)/N(6)-dimethyladenosine(1519) in 16S rRNA + 4 S-adenosyl-L-homocysteine + 4 H(+). Functionally, specifically dimethylates two adjacent adenosines (A1518 and A1519) in the loop of a conserved hairpin near the 3'-end of 16S rRNA in the 30S particle. May play a critical role in biogenesis of 30S subunits. In Shigella flexneri, this protein is Ribosomal RNA small subunit methyltransferase A.